The sequence spans 575 residues: Septation ring formation regulator EzrA (575 aa).

At 1–8 the chain is on the extracellular side; that stretch reads MSNGQLIY. Residues 9-27 form a helical membrane-spanning segment; it reads LMVAIAVILVLAYVVAIFL. Residues 28–575 lie on the Cytoplasmic side of the membrane; that stretch reads RKRNEGRLEA…YEKTRETIRF (548 aa). Coiled-coil stretches lie at residues 110–191, 265–301, 354–416, and 456–526; these read QIDQ…FVTL, LYEA…LYDI, VRRI…IEKD, and TASN…IQEA.

Belongs to the EzrA family.

It localises to the cell membrane. In terms of biological role, negative regulator of FtsZ ring formation; modulates the frequency and position of FtsZ ring formation. Inhibits FtsZ ring formation at polar sites. Interacts either with FtsZ or with one of its binding partners to promote depolymerization. The polypeptide is Septation ring formation regulator EzrA (Streptococcus pneumoniae (strain JJA)).